The sequence spans 219 residues: Peroxiredoxin-5, mitochondrial (219 aa).

Residues 1-57 (MRLGWLRVLGCRPGSVVSRATIVEGASTTAAGTRGCLEGILEWTFGGVRGFRSAAVA) constitute a mitochondrion transit peptide. One can recognise a Thioredoxin domain in the interval 61–219 (IKVGDAIPSV…SLAPNILSQL (159 aa)). Residue K80 is modified to N6-acetyllysine. K88 carries the N6-acetyllysine; alternate modification. K88 bears the N6-succinyllysine; alternate mark. The active-site Cysteine sulfenic acid (-SOH) intermediate is the C105. The S-palmitoyl cysteine moiety is linked to residue C105. C105 and C209 form a disulfide bridge. An N6-succinyllysine modification is found at K121. S187 is subject to Phosphoserine. The short motif at 217–219 (SQL) is the Microbody targeting signal element.

It belongs to the peroxiredoxin family. Prx5 subfamily. As to quaternary structure, monomer. S-palmitoylated. Palmitoylation occurs on the active site, inhibiting its reactivity; therefore PRDX5 palmitoylation status determines its antioxidant capacity. In terms of processing, S-palmitoylated. Depalmitoylated by ABHD10.

Its subcellular location is the mitochondrion. The protein localises to the cytoplasm. It is found in the peroxisome matrix. It carries out the reaction a hydroperoxide + [thioredoxin]-dithiol = an alcohol + [thioredoxin]-disulfide + H2O. In terms of biological role, thiol-specific peroxidase that catalyzes the reduction of hydrogen peroxide and organic hydroperoxides to water and alcohols, respectively. Plays a role in cell protection against oxidative stress by detoxifying peroxides and as sensor of hydrogen peroxide-mediated signaling events. The sequence is that of Peroxiredoxin-5, mitochondrial (PRDX5) from Bos taurus (Bovine).